The following is a 305-amino-acid chain: Insulin-like growth factor-binding protein 2 (305 aa).

A signal peptide spans 1–34 (MLPRLGGPALPLLLPSLLLLLLLGAGGCGPGVRA). In terms of domain architecture, IGFBP N-terminal spans 36–118 (VLFRCPPCTP…VTGAGTCEKR (83 aa)). Cystine bridges form between C40–C68, C43–C70, C51–C71, C59–C74, C82–C95, C89–C115, C207–C241, C252–C263, and C265–C286. Residues 204-286 (RTPCQQELDQ…APTIRGDPEC (83 aa)) form the Thyroglobulin type-1 domain. Residues 281-283 (RGD) carry the Cell attachment site motif.

As to quaternary structure, interacts with IGF1. Interacts with IGF2. Interacts (via RGD motif) with integrin alpha5/ITGA5; this interaction induces cell migration, adhesion or apoptosis according to the context. Interacts with PTPRB; this interaction leads to PTPRB dimerization and inactivation. Post-translationally, cleaved by MMP9 leading to release of free IGF2 from IGFBP2-IGF2 complex, which contributes to enhance the motility and the growth of astrocytes. In terms of processing, O-glycosylated. As to expression, highly expressed in adult liver, but also in kidney, lung, brain, spleen, testis and ovary.

The protein resides in the secreted. Multifunctional protein that plays a critical role in regulating the availability of IGFs such as IGF1 and IGF2 to their receptors and thereby regulates IGF-mediated cellular processes including proliferation, differentiation, and apoptosis in a cell-type specific manner. Functions coordinately with receptor protein tyrosine phosphatase beta/PTPRB and the IGF1 receptor to regulate IGF1-mediated signaling by stimulating the phosphorylation of PTEN leading to its inactivation and AKT1 activation. Plays a positive role in cell migration via interaction with integrin alpha5/ITGA5 through an RGD motif. Additionally, interaction with ITGA5/ITGB1 enhances the adhesion of endothelial progenitor cells to endothelial cells. Upon mitochondrial damage, facilitates apoptosis with ITGA5 of podocytes, and then activates the phosphorylation of focal adhesion kinase (FAK)-mediated mitochondrial injury. The chain is Insulin-like growth factor-binding protein 2 (Igfbp2) from Mus musculus (Mouse).